Here is a 189-residue protein sequence, read N- to C-terminus: Adenine phosphoribosyltransferase (189 aa).

Belongs to the purine/pyrimidine phosphoribosyltransferase family. In terms of assembly, homodimer.

The protein localises to the cytoplasm. It catalyses the reaction AMP + diphosphate = 5-phospho-alpha-D-ribose 1-diphosphate + adenine. It participates in purine metabolism; AMP biosynthesis via salvage pathway; AMP from adenine: step 1/1. Its function is as follows. Catalyzes a salvage reaction resulting in the formation of AMP, that is energically less costly than de novo synthesis. The chain is Adenine phosphoribosyltransferase from Frankia alni (strain DSM 45986 / CECT 9034 / ACN14a).